Consider the following 191-residue polypeptide: UPF0669 protein C6orf120 homolog (191 aa).

Residues 1–30 (MAAPRGRAAPWTTALLLLLTSQILSPGSCA) form the signal peptide. Asparagine 53 is a glycosylation site (N-linked (GlcNAc...) asparagine).

The protein belongs to the UPF0669 family.

Its subcellular location is the secreted. Functionally, may be involved in induction of apoptosis in CD4(+) T-cells, but not CD8(+) T-cells or hepatocytes. This is UPF0669 protein C6orf120 homolog from Macaca fascicularis (Crab-eating macaque).